The primary structure comprises 197 residues: RNA chaperone ProQ (197 aa).

The interval 115-138 is disordered; it reads RAAAKKAQQKKHPRKPANKNLKKE. Basic residues predominate over residues 117-131; the sequence is AAKKAQQKKHPRKPA.

Belongs to the ProQ family.

It is found in the cytoplasm. RNA chaperone with significant RNA binding, RNA strand exchange and RNA duplexing activities. In Haemophilus influenzae (strain ATCC 51907 / DSM 11121 / KW20 / Rd), this protein is RNA chaperone ProQ.